The primary structure comprises 71 residues: Heat-stable enterotoxin II (71 aa).

The N-terminal stretch at 1–23 is a signal peptide; the sequence is MKKNIAFLLASMFVFSIATNAYA. Intrachain disulfides connect Cys33–Cys71 and Cys44–Cys59.

The protein localises to the secreted. Functionally, toxin which activates the particulate form of guanylate cyclase and increases cyclic GMP levels within the host intestinal epithelial cells. This chain is Heat-stable enterotoxin II (stiI), found in Escherichia coli.